The chain runs to 385 residues: Tetraacyldisaccharide 4'-kinase (385 aa).

Position 60–67 (60–67) interacts with ATP; sequence TVGGSGKT.

This sequence belongs to the LpxK family.

It catalyses the reaction a lipid A disaccharide + ATP = a lipid IVA + ADP + H(+). It functions in the pathway glycolipid biosynthesis; lipid IV(A) biosynthesis; lipid IV(A) from (3R)-3-hydroxytetradecanoyl-[acyl-carrier-protein] and UDP-N-acetyl-alpha-D-glucosamine: step 6/6. Transfers the gamma-phosphate of ATP to the 4'-position of a tetraacyldisaccharide 1-phosphate intermediate (termed DS-1-P) to form tetraacyldisaccharide 1,4'-bis-phosphate (lipid IVA). This Psychrobacter arcticus (strain DSM 17307 / VKM B-2377 / 273-4) protein is Tetraacyldisaccharide 4'-kinase.